The following is a 132-amino-acid chain: UPF0047 protein YugU (132 aa).

This sequence belongs to the UPF0047 family.

In Bacillus subtilis (strain 168), this protein is UPF0047 protein YugU (yugU).